Here is a 288-residue protein sequence, read N- to C-terminus: Glandicoline B O-methyltransferase roqN (288 aa).

Residues T57, D82, and 109–110 (DA) contribute to the S-adenosyl-L-methionine site.

It belongs to the class I-like SAM-binding methyltransferase superfamily.

It carries out the reaction glandicoline B + S-adenosyl-L-methionine = meleagrin + S-adenosyl-L-homocysteine + H(+). Its pathway is alkaloid biosynthesis. Glandicoline B O-methyltransferase; part of the gene cluster that mediates the biosynthesis of the mycotoxin meleagrin. The first stage is catalyzed by the dipeptide synthase roqA which condenses histidine and tryptophan to produce histidyltryptophanyldiketopiperazine (HTD). HTD is then converted to roquefortine C through two possible pathways. In the first pathway, prenyltransferase roqD transforms HTD to the intermediate roquefortine D, which is in turn converted to roquefortine C by the cytochrome P450 monooxygenase roqR. In the second pathway, HTD is first converted to the intermediate dehydrohistidyltryptophanyldi-ketopiperazine (DHTD) by roqR which is then prenylated by roqD to form roquefortine C. Roquefortine C can be further transformed to meleagrin via three more reactions including oxydation to glandicolin A by roqM, which is further reduced to glandicoline B by roqO. Finally, glandicoline B is converted to meleagrin by the glandicoline B O-methyltransferase roqN. More studies identified further branching and additional metabolites produced by the roquefortine/meleagrin cluster, including roquefortine F, roquefortine L, roquefortine M, roquefortine N and neoxaline. The chain is Glandicoline B O-methyltransferase roqN from Penicillium rubens (strain ATCC 28089 / DSM 1075 / NRRL 1951 / Wisconsin 54-1255) (Penicillium chrysogenum).